Here is a 254-residue protein sequence, read N- to C-terminus: 3-deoxy-manno-octulosonate cytidylyltransferase (254 aa).

This sequence belongs to the KdsB family.

Its subcellular location is the cytoplasm. The catalysed reaction is 3-deoxy-alpha-D-manno-oct-2-ulosonate + CTP = CMP-3-deoxy-beta-D-manno-octulosonate + diphosphate. It participates in nucleotide-sugar biosynthesis; CMP-3-deoxy-D-manno-octulosonate biosynthesis; CMP-3-deoxy-D-manno-octulosonate from 3-deoxy-D-manno-octulosonate and CTP: step 1/1. The protein operates within bacterial outer membrane biogenesis; lipopolysaccharide biosynthesis. Functionally, activates KDO (a required 8-carbon sugar) for incorporation into bacterial lipopolysaccharide in Gram-negative bacteria. The sequence is that of 3-deoxy-manno-octulosonate cytidylyltransferase from Haemophilus influenzae (strain PittGG).